Here is a 165-residue protein sequence, read N- to C-terminus: Putative defense protein Hdd11 (165 aa).

Positions 1–17 (MWATYVFIAVSLACANG) are cleaved as a signal peptide. In terms of domain architecture, Reelin spans 18 to 165 (YSSGAPESVC…VESGPVKVIS (148 aa)). Cysteine 27 and cysteine 104 are joined by a disulfide.

Belongs to the insect defense protein family.

It is found in the secreted. Functionally, as this protein is expressed upon bacterial infection, it may have antimicrobial activity. This is Putative defense protein Hdd11 from Hyphantria cunea (Fall webworm moth).